Reading from the N-terminus, the 146-residue chain is Large ribosomal subunit protein uL11 (146 aa).

This sequence belongs to the universal ribosomal protein uL11 family. Part of the ribosomal stalk of the 50S ribosomal subunit. Interacts with L10 and the large rRNA to form the base of the stalk. L10 forms an elongated spine to which L12 dimers bind in a sequential fashion forming a multimeric L10(L12)X complex. One or more lysine residues are methylated.

In terms of biological role, forms part of the ribosomal stalk which helps the ribosome interact with GTP-bound translation factors. The chain is Large ribosomal subunit protein uL11 from Corynebacterium kroppenstedtii (strain DSM 44385 / JCM 11950 / CIP 105744 / CCUG 35717).